The primary structure comprises 334 residues: Anthranilate phosphoribosyltransferase (334 aa).

5-phospho-alpha-D-ribose 1-diphosphate is bound by residues Gly79, 82 to 83 (GD), Ser87, 89 to 92 (NIST), 107 to 115 (KHGNRSISS), and Ser119. Gly79 contacts anthranilate. Residue Ser91 participates in Mg(2+) binding. Position 110 (Asn110) interacts with anthranilate. Anthranilate is bound at residue Arg165. Mg(2+) contacts are provided by Asp224 and Glu225.

It belongs to the anthranilate phosphoribosyltransferase family. In terms of assembly, homodimer. The cofactor is Mg(2+).

The enzyme catalyses N-(5-phospho-beta-D-ribosyl)anthranilate + diphosphate = 5-phospho-alpha-D-ribose 1-diphosphate + anthranilate. It participates in amino-acid biosynthesis; L-tryptophan biosynthesis; L-tryptophan from chorismate: step 2/5. Its function is as follows. Catalyzes the transfer of the phosphoribosyl group of 5-phosphorylribose-1-pyrophosphate (PRPP) to anthranilate to yield N-(5'-phosphoribosyl)-anthranilate (PRA). This is Anthranilate phosphoribosyltransferase from Streptococcus gordonii (strain Challis / ATCC 35105 / BCRC 15272 / CH1 / DL1 / V288).